Here is a 214-residue protein sequence, read N- to C-terminus: Ribosomal RNA small subunit methyltransferase G (214 aa).

S-adenosyl-L-methionine-binding positions include glycine 58, 109–110 (AE), and arginine 126.

It belongs to the methyltransferase superfamily. RNA methyltransferase RsmG family.

It is found in the cytoplasm. Functionally, specifically methylates the N7 position of a guanine in 16S rRNA. In Ureaplasma parvum serovar 3 (strain ATCC 700970), this protein is Ribosomal RNA small subunit methyltransferase G.